The following is a 508-amino-acid chain: T-complex protein 1 subunit beta (508 aa).

This sequence belongs to the TCP-1 chaperonin family. In terms of assembly, component of the T-complex protein 1 (TCP1) complex.

It localises to the cytoplasm. Its function is as follows. Molecular chaperone; assists the folding of proteins upon ATP hydrolysis. This is T-complex protein 1 subunit beta (CCT2) from Encephalitozoon cuniculi (strain GB-M1) (Microsporidian parasite).